The chain runs to 354 residues: Mitogen-activated protein kinase kinase 1 (354 aa).

Positions 68–328 (LEVIKVIGKG…AKELLEHKFV (261 aa)) constitute a Protein kinase domain. Residues 74 to 82 (IGKGSSGNV) and Lys97 contribute to the ATP site. Residue Asp190 is the Proton acceptor of the active site. Phosphothreonine is present on Thr218. Ser224 carries the phosphoserine modification. The residue at position 228 (Thr228) is a Phosphothreonine.

This sequence belongs to the protein kinase superfamily. STE Ser/Thr protein kinase family. MAP kinase kinase subfamily. In terms of assembly, interacts with MEKK1 and MPK4. May form a ternary complex composed of MEKK1 and MKK1/MKK2 and MPK4. Interacts with P.syringae type III effector HopF2. Interacts with MPK11. Post-translationally, phosphorylation at Thr-218 and Ser-224 by MAP kinase kinase kinases positively regulates kinase activity. Expressed in roots, stem, flowers and siliques.

The catalysed reaction is L-seryl-[protein] + ATP = O-phospho-L-seryl-[protein] + ADP + H(+). It carries out the reaction L-threonyl-[protein] + ATP = O-phospho-L-threonyl-[protein] + ADP + H(+). It catalyses the reaction L-tyrosyl-[protein] + ATP = O-phospho-L-tyrosyl-[protein] + ADP + H(+). With respect to regulation, activated through serine and threonine phosphorylation in response to wounding, cold, drought, salt stresses, abscisic acid (ABA), hydrogen peroxide, bacterial flagellin and laminarin beta-glucan. Its function is as follows. MEKK1, MKK1/MKK2 and MPK4/MPK6 function in a signaling pathway that modulates the expression of genes responding to biotic and abiotic stresses and also plays an important role in pathogen defense by negatively regulating innate immunity. Activates by phosphorylation the downstream MPK4. Acts redundantly with MKK2. MKK1-MPK6 module mediates abscisic acid (ABA)-dependent CAT1 expression with H(2)O(2) production and response to drought and salt stress. MKK1-MPK6 module is also involved in sugar signaling during the process of seed germination. The sequence is that of Mitogen-activated protein kinase kinase 1 (MKK1) from Arabidopsis thaliana (Mouse-ear cress).